Here is a 298-residue protein sequence, read N- to C-terminus: MATH domain and coiled-coil domain-containing protein At3g58280 (298 aa).

The MATH domain occupies 9 to 128 (KKTFGWVIKD…NGEITIIAEV (120 aa)). Positions 240–288 (NLDWLRQKFDQALEKQIAYDTRIGELEKQVKKRKLAVTELEADLEKEKA) form a coiled coil.

The protein is MATH domain and coiled-coil domain-containing protein At3g58280 of Arabidopsis thaliana (Mouse-ear cress).